A 324-amino-acid chain; its full sequence is Galactosylgalactosylxylosylprotein 3-beta-glucuronosyltransferase 2 (324 aa).

The Cytoplasmic portion of the chain corresponds to 1 to 2 (MK). Residues 3–23 (SALCSRFFILLPWILIVIIML) form a helical; Signal-anchor for type II membrane protein membrane-spanning segment. Residues 24-324 (DVDPRRPAPQ…YHLDTVNIEV (301 aa)) are Lumenal-facing. The interval 50-78 (SRVPLRRSSPGRDAAEKRNESRPQLQPEP) is disordered. The N-linked (GlcNAc...) asparagine glycan is linked to Asn68. Residues 88-90 (PTY), Asp119, Arg156, Arg161, and 186-188 (DDD) each bind UDP-alpha-D-glucuronate. Asp188 is a Mn(2+) binding site. The tract at residues 235 to 244 (WREDRPFAID) is interaction with galactose moiety of substrate glycoprotein. The Proton donor/acceptor role is filled by Glu274. Asn293 carries an N-linked (GlcNAc...) asparagine glycan. Position 301-303 (301-303 (HTR)) interacts with UDP-alpha-D-glucuronate.

This sequence belongs to the glycosyltransferase 43 family. As to quaternary structure, homodimer. The cofactor is Mn(2+). Expressed in brain, but not in liver and kidney.

The protein resides in the golgi apparatus membrane. It carries out the reaction 3-O-(beta-D-galactosyl-(1-&gt;3)-beta-D-galactosyl-(1-&gt;4)-beta-D-xylosyl)-L-seryl-[protein] + UDP-alpha-D-glucuronate = 3-O-(beta-D-GlcA-(1-&gt;3)-beta-D-Gal-(1-&gt;3)-beta-D-Gal-(1-&gt;4)-beta-D-Xyl)-L-seryl-[protein] + UDP + H(+). Its pathway is protein modification; protein glycosylation. Involved in the biosynthesis of L2/HNK-1 carbohydrate epitope on both glycolipids and glycoproteins. The chain is Galactosylgalactosylxylosylprotein 3-beta-glucuronosyltransferase 2 (B3gat2) from Mus musculus (Mouse).